The chain runs to 571 residues: Cationic amino acid transporter 8 (571 aa).

N-linked (GlcNAc...) asparagine glycosylation occurs at Asn35. 6 helical membrane-spanning segments follow: residues 39–59 (FWLLVIIVIYTATSACIYFDW), 94–114 (SLYPITLAIHFTMSVFCGFLY), 117–137 (IGPKFTAIIGQMCNIMSWVFL), 148–168 (FLSFVFLGLGADTAFIPILTI), 177–197 (TFILTVVGAAASLSYAVPATL), and 217–237 (IFLILVPCLLVATFLLPLMPF). N-linked (GlcNAc...) asparagine glycans are attached at residues Asn298, Asn325, and Asn346. A helical transmembrane segment spans residues 365-385 (LFFKVLLSYPSICIIVYFILF). An N-linked (GlcNAc...) asparagine glycan is attached at Asn386. Transmembrane regions (helical) follow at residues 405 to 425 (SIINIINILMPISCIPCIIFG), 433 to 453 (SAIIIILMNAFSALMHLTALI), 461 to 481 (VSAFLYMCVTSIYTSQIYCFI), 488 to 508 (VVFGKLLGFASLCGGLFSLLC), and 528 to 548 (VVLLLVIAFILMFLPLTVLYF).

This sequence belongs to the SLC43A transporter (TC 2.A.1.44) family.

Its subcellular location is the membrane. It carries out the reaction L-arginine(in) = L-arginine(out). Functionally, sodium-independent cationic amino acid transporter. Transports L-arginine, L-lysine, L-histidine and L-ornithine. This chain is Cationic amino acid transporter 8, found in Plasmodium vivax (strain Salvador I).